Consider the following 1817-residue polypeptide: Breast cancer type 1 susceptibility protein homolog (1817 aa).

Met1 carries the N-acetylmethionine modification. An RING-type zinc finger spans residues 24 to 65 (CPICLELIKEPVSTQCDHIFCKFCMLKLLNQKKGPSQCPLCK). A Glycyl lysine isopeptide (Lys-Gly) (interchain with G-Cter in SUMO2) cross-link involves residue Lys109. At Ser114 the chain carries Phosphoserine. Residue Lys299 forms a Glycyl lysine isopeptide (Lys-Gly) (interchain with G-Cter in SUMO2) linkage. The interval 305–346 (RSKQSGAAVSQQSRWADSKETCNGRPVPRTEGKADPNVDSLC) is disordered. Positions 308 to 319 (QSGAAVSQQSRW) are enriched in polar residues. Over residues 320–340 (ADSKETCNGRPVPRTEGKADP) the composition is skewed to basic and acidic residues. Lys337 is covalently cross-linked (Glycyl lysine isopeptide (Lys-Gly) (interchain with G-Cter in SUMO2)). Phosphoserine is present on Ser393. Residue Lys457 forms a Glycyl lysine isopeptide (Lys-Gly) (interchain with G-Cter in SUMO2) linkage. A Nuclear localization signal motif is present at residues 497–503 (KLKRKRS). Glycyl lysine isopeptide (Lys-Gly) (interchain with G-Cter in SUMO2) cross-links involve residues Lys513 and Lys578. Polar residues predominate over residues 640–652 (SEETKKNNSNQTP). 4 disordered regions span residues 640-720 (SEET…SPER), 735-768 (NKEL…PDTD), 874-907 (LVGA…SEIS), and 959-982 (GISQ…TDNR). Positions 669-679 (ADAKKNEPNEH) are enriched in basic and acidic residues. Phosphoserine occurs at positions 686, 706, and 717. Low complexity predominate over residues 744–760 (GGEPSGKPTEPSEESTS). The segment covering 891–901 (SRGEQKERQGQ) has biased composition (basic and acidic residues). A compositionally biased stretch (polar residues) spans 959–976 (GISQNSHFRQSVSPLRSS). A Phosphoserine; by CHEK2 modification is found at Ser975. Lys1049 participates in a covalent cross-link: Glycyl lysine isopeptide (Lys-Gly) (interchain with G-Cter in SUMO2). The disordered stretch occupies residues 1146–1185 (LRRESSRSPSPVTHASKSRSLHRGSRKLEFSEESDSTEDE). Phosphoserine occurs at positions 1153 and 1155. The segment covering 1161–1170 (SKSRSLHRGS) has biased composition (basic residues). The span at 1176–1185 (SEESDSTEDE) shows a compositional bias: acidic residues. Phosphoserine is present on residues Ser1181 and Ser1242. Residues 1259–1290 (SSQHSAALGSPANALSQDPDFNPPSKQRRHQA) are disordered. Residues Ser1298, Ser1304, and Ser1344 each carry the phosphoserine modification. Residue Thr1351 is modified to Phosphothreonine. Positions 1354–1381 (RATMKDNLIKLQQEMAQLEAVLEQHGSQ) are interaction with PALB2. Disordered regions lie at residues 1375–1486 (LEQH…QEEL) and 1498–1534 (PHNL…DSES). Phosphoserine occurs at positions 1380, 1414, and 1482. Composition is skewed to polar residues over residues 1405 to 1426 (NRSG…SQNP) and 1473 to 1485 (RSLQ…SQEE). BRCT domains are found at residues 1588–1682 (PKER…EFEV) and 1701–1800 (SQEK…AYLV).

As to quaternary structure, heterodimer with BARD1. Part of the BRCA1-associated genome surveillance complex (BASC), which contains BRCA1, MSH2, MSH6, MLH1, ATM, BLM, PMS2 and the MRE11-RAD50-NBN protein (MRN) complex. This association could be a dynamic process changing throughout the cell cycle and within subnuclear domains. Component of the BRCA1-A complex, at least composed of BRCA1, BARD1, UIMC1/RAP80, ABRAXAS1, BRCC3/BRCC36, BABAM2 and BABAM1/NBA1. Interacts (via the BRCT domains) with ABRAXAS1 (phosphorylated form); this is important for recruitment to sites of DNA damage. Can form a heterotetramer with two molecules of ABRAXAS1 (phosphorylated form). Component of the BRCA1-RBBP8 complex. Interacts (via the BRCT domains) with RBBP8 ('Ser-327' phosphorylated form); the interaction ubiquitinates RBBP8, regulates CHEK1 activation, and involves RBBP8 in BRCA1-dependent G2/M checkpoint control on DNA damage. Associates with RNA polymerase II holoenzyme. Interacts with SMC1A, NELFB, DCLRE1C, CLSPN. CHEK1, CHEK2, BAP1, BRCC3, UBXN1 and PCLAF. Interacts (via BRCT domains) with BRIP1 (phosphorylated form). Interacts with FANCD2 (ubiquitinated form). Interacts with H2AX (phosphorylated on 'Ser-140'). Interacts (via the BRCT domains) with ACACA (phosphorylated form); the interaction prevents dephosphorylation of ACACA. Part of a BRCA complex containing BRCA1, BRCA2 and PALB2. Interacts directly with PALB2; the interaction is essential for its function in HRR. Interacts directly with BRCA2; the interaction occurs only in the presence of PALB2 which serves as the bridging protein. Interacts (via the BRCT domains) with LMO4; the interaction represses the transcriptional activity of BRCA1. Interacts (via the BRCT domains) with CCAR2 (via N-terminus); the interaction represses the transcriptional activator activity of BRCA1. Interacts with EXD2. Interacts (via C-terminus) with DHX9; this interaction is direct and links BRCA1 to the RNA polymerase II holoenzyme. Interacts with DNA helicase ZGRF1; the interaction is increased following DNA damage induction. In terms of processing, phosphorylated in response to IR, UV, and various stimuli that cause checkpoint activation, probably by ATM or ATR. Phosphorylation at Ser-975 by CHEK2 regulates mitotic spindle assembly. Phosphorylation by AURKA regulates centrosomal microtubule nucleation. Autoubiquitinated, undergoes 'Lys-6'-linked polyubiquitination. 'Lys-6'-linked polyubiquitination does not promote degradation.

Its subcellular location is the nucleus. It is found in the chromosome. The protein resides in the cytoplasm. It carries out the reaction S-ubiquitinyl-[E2 ubiquitin-conjugating enzyme]-L-cysteine + [acceptor protein]-L-lysine = [E2 ubiquitin-conjugating enzyme]-L-cysteine + N(6)-ubiquitinyl-[acceptor protein]-L-lysine.. The protein operates within protein modification; protein ubiquitination. E3 ubiquitin-protein ligase that specifically mediates the formation of 'Lys-6'-linked polyubiquitin chains and plays a central role in DNA repair by facilitating cellular responses to DNA damage. It is unclear whether it also mediates the formation of other types of polyubiquitin chains. The BRCA1-BARD1 heterodimer coordinates a diverse range of cellular pathways such as DNA damage repair, ubiquitination and transcriptional regulation to maintain genomic stability. Regulates centrosomal microtubule nucleation. Required for appropriate cell cycle arrests after ionizing irradiation in both the S-phase and the G2 phase of the cell cycle. Required for FANCD2 targeting to sites of DNA damage. Inhibits lipid synthesis by binding to inactive phosphorylated ACACA and preventing its dephosphorylation. Contributes to homologous recombination repair (HRR) via its direct interaction with PALB2, fine-tunes recombinational repair partly through its modulatory role in the PALB2-dependent loading of BRCA2-RAD51 repair machinery at DNA breaks. Component of the BRCA1-RBBP8 complex which regulates CHEK1 activation and controls cell cycle G2/M checkpoints on DNA damage via BRCA1-mediated ubiquitination of RBBP8. Acts as a transcriptional activator. This chain is Breast cancer type 1 susceptibility protein homolog (Brca1), found in Rattus norvegicus (Rat).